The following is a 513-amino-acid chain: MNSSNAIFKTFLGSAPEWYKLCIITFLVINPLIYFFVSPFIAGWTLVAEFIFTLSMALKCYPLQPGGLLAIEAVAIGMTSPHHVKHEIIANFEVILLLMFMVAGIYFMKQLLLYVFTKLLIVIRSKKVLSLSFCLSAAFLSAFLDALTVIAVIISVGTGFYGVYHKVASGSTFEDSTDISNDDKIITNKKILEQFRAFLRSLLMHAAVGSALGGVMTMVGEPQNLIIASQAEWGFIEFLIRVAPVSLPVLICGIATCLLLEHFKVFGYGERLPRRVWGVLARYNVLQEQHMTKQDRVKMAIQALAGIWLIVGLALHLADVGIIGLTIIIICTAFCGITDEHAIGRSFQEPMPFTALIVVFFTIVAVIVDLKLFEPIINFVLSADPHSQLALFYVFNGLLSMISDNVFVGTVYMNETKAALTSGFISREQFDLIAVAINTGTNLPSVATPNGQAAFLFLLTSPFAPLIRLSYSRMIYMALPYTIVLSIVGFFALEYLLPPLTELMTNWGWLIAR.

11 helical membrane passes run 21–41 (LCII…SPFI), 43–63 (GWTL…CYPL), 88–108 (IIAN…IYFM), 137–157 (AAFL…ISVG), 202–222 (LLMH…VGEP), 235–255 (FIEF…CGIA), 299–318 (MAIQ…LHLA), 322–344 (IIGL…HAIG), 350–370 (PMPF…IVDL), 389–409 (LALF…VFVG), and 477–497 (MALP…EYLL).

The protein belongs to the NhaB Na(+)/H(+) (TC 2.A.34) antiporter family.

The protein resides in the cell inner membrane. The catalysed reaction is 2 Na(+)(in) + 3 H(+)(out) = 2 Na(+)(out) + 3 H(+)(in). In terms of biological role, na(+)/H(+) antiporter that extrudes sodium in exchange for external protons. The protein is Na(+)/H(+) antiporter NhaB of Haemophilus ducreyi (strain 35000HP / ATCC 700724).